The sequence spans 276 residues: Rhomboid protease GlpG (276 aa).

The next 6 helical transmembrane spans lie at 94-114, 142-162, 169-189, 192-212, 229-249, and 250-270; these read GPVT…MQIL, ALMH…WYLG, LGSG…GYVQ, FSGP…GYVW, LIIF…GMSM, and ANGA…VDSL. S201 serves as the catalytic Nucleophile. H254 is a catalytic residue.

Belongs to the peptidase S54 family.

The protein resides in the cell inner membrane. It carries out the reaction Cleaves type-1 transmembrane domains using a catalytic dyad composed of serine and histidine that are contributed by different transmembrane domains.. Functionally, rhomboid-type serine protease that catalyzes intramembrane proteolysis. The chain is Rhomboid protease GlpG from Escherichia coli O7:K1 (strain IAI39 / ExPEC).